A 244-amino-acid polypeptide reads, in one-letter code: Cell division protein ZapD (244 aa).

The protein belongs to the ZapD family. Interacts with FtsZ.

The protein localises to the cytoplasm. In terms of biological role, cell division factor that enhances FtsZ-ring assembly. Directly interacts with FtsZ and promotes bundling of FtsZ protofilaments, with a reduction in FtsZ GTPase activity. The protein is Cell division protein ZapD of Shewanella oneidensis (strain ATCC 700550 / JCM 31522 / CIP 106686 / LMG 19005 / NCIMB 14063 / MR-1).